The primary structure comprises 525 residues: uncharacterized protein (525 aa).

The zn(2)-C6 fungal-type DNA-binding region spans 21–48 (CLICRSMRKKCDEVHPQCGRCLKAGKQC).

It localises to the cytoplasm. The protein resides in the nucleus. This is an uncharacterized protein from Schizosaccharomyces pombe (strain 972 / ATCC 24843) (Fission yeast).